A 426-amino-acid polypeptide reads, in one-letter code: Casein kinase I (426 aa).

The 270-residue stretch at 9–278 (YRISRKIGGG…LRKLLREMFV (270 aa)) folds into the Protein kinase domain. ATP contacts are provided by residues 15 to 23 (IGGGSFGEI) and K38. Catalysis depends on D128, which acts as the Proton acceptor. Disordered stretches follow at residues 340-360 (TTTT…TVSN) and 377-426 (PSYN…PPAK). Over residues 345-360 (SSSQPSNVKNISTVSN) the composition is skewed to polar residues. A compositionally biased stretch (low complexity) spans 386–404 (QSPQQTTTTTSSSNPNQTT). The span at 414–426 (PQSSSTTTKPPAK) shows a compositional bias: polar residues.

This sequence belongs to the protein kinase superfamily. CK1 Ser/Thr protein kinase family. Casein kinase I subfamily. In terms of assembly, monomer. Autophosphorylated.

It localises to the cytoplasm. The protein localises to the nucleus. It carries out the reaction L-seryl-[protein] + ATP = O-phospho-L-seryl-[protein] + ADP + H(+). The catalysed reaction is L-threonyl-[protein] + ATP = O-phospho-L-threonyl-[protein] + ADP + H(+). Its function is as follows. Casein kinases are operationally defined by their preferential utilization of acidic proteins such as caseins as substrates. Can phosphorylate a large number of proteins. May have a role in DNA repair mechanism and support vegetative growth of the cells. In Dictyostelium discoideum (Social amoeba), this protein is Casein kinase I (cak1-1).